A 370-amino-acid chain; its full sequence is Putative 8-amino-7-oxononanoate synthase (370 aa).

Arg-20 serves as a coordination point for substrate. 95 to 96 (GY) provides a ligand contact to pyridoxal 5'-phosphate. His-120 is a substrate binding site. Pyridoxal 5'-phosphate contacts are provided by residues Ser-167, 192-195 (DDAH), and 223-226 (TLSK). The residue at position 226 (Lys-226) is an N6-(pyridoxal phosphate)lysine. Position 337 (Thr-337) interacts with substrate.

It belongs to the class-II pyridoxal-phosphate-dependent aminotransferase family. BioF subfamily. Homodimer. Pyridoxal 5'-phosphate serves as cofactor.

It carries out the reaction 6-carboxyhexanoyl-[ACP] + L-alanine + H(+) = (8S)-8-amino-7-oxononanoate + holo-[ACP] + CO2. Its pathway is cofactor biosynthesis; biotin biosynthesis. In terms of biological role, catalyzes the decarboxylative condensation of pimeloyl-[acyl-carrier protein] and L-alanine to produce 8-amino-7-oxononanoate (AON), [acyl-carrier protein], and carbon dioxide. This chain is Putative 8-amino-7-oxononanoate synthase (bioF), found in Methanococcus vannielii (strain ATCC 35089 / DSM 1224 / JCM 13029 / OCM 148 / SB).